The sequence spans 265 residues: Polyglutamine-binding protein 1 (265 aa).

Positions 46–80 constitute a WW domain; it reads EGLPPSWYKVFDPSCGLPYYWNADTDLVSWLSPHD. Residue Ser-94 is modified to Phosphoserine. The segment at 94–265 is disordered; the sequence is SSNADAEEKL…AEASRTKQQD (172 aa). Over residues 99–175 the composition is skewed to basic and acidic residues; sequence AEEKLDRSHD…DKADREEGKE (77 aa). 15 tandem repeats follow at residues 104–110, 111–117, 118–124, 125–131, 132–138, 139–140, 141–142, 143–144, 150–151, 152–153, 154–155, 156–157, 158–159, 160–161, and 162–163. Residues 104 to 138 form a 5 X 7 AA approximate tandem repeats of D-R-[SG]-H-D-K-S region; that stretch reads DRSHDKSDRGHDKSDRSHEKLDRGHDKSDRGHDKS. Positions 139–144 are 3 X 2 AA tandem repeats of [DE]-R; the sequence is DRDRER. The interval 150–163 is 7 X 2 AA tandem repeats of [DE]-R; it reads DRERERDRERDRDR. Residues 245 to 255 are important for interaction with TXNL4A; the sequence is YPSPGAVLRAN. At Ser-247 the chain carries Phosphoserine.

As to quaternary structure, interacts with POU3F2/Brn-2, ATXN1, TXNL4A, HTT and AR. Interaction with ATXN1 correlates positively with the length of the polyglutamine tract. Interacts with RNA polymerase II large subunit in a phosphorylation-dependent manner. Forms a ternary complex with ATXN1 mutant and phosphorylated RNA polymerase II. Interacts (via C-terminus) with TXNL4A and CD2BP2. Interacts (via WW domain) with ATN1 and SF3B1, and may interact with additional splice factors. Interacts (via WW domain) with WBP11; Leading to reduce interaction between PQBP1 and TXNL4A. Interacts with CAPRIN1. Interacts with DDX1. Interacts with SFPQ. Interacts with KHSRP.

It localises to the nucleus. The protein localises to the nucleus speckle. It is found in the cytoplasmic granule. Functionally, intrinsically disordered protein that acts as a scaffold, and which is involved in different processes, such as pre-mRNA splicing, transcription regulation, innate immunity and neuron development. Interacts with splicing-related factors via the intrinsically disordered region and regulates alternative splicing of target pre-mRNA species. May suppress the ability of POU3F2 to transactivate the DRD1 gene in a POU3F2 dependent manner. Can activate transcription directly or via association with the transcription machinery. May be involved in ATXN1 mutant-induced cell death. The interaction with ATXN1 mutant reduces levels of phosphorylated RNA polymerase II large subunit. Involved in the assembly of cytoplasmic stress granule, possibly by participating in the transport of neuronal RNA granules. Also acts as an innate immune sensor of infection by retroviruses, by detecting the presence of reverse-transcribed DNA in the cytosol. Directly binds retroviral reverse-transcribed DNA in the cytosol and interacts with CGAS, leading to activate the cGAS-STING signaling pathway, triggering type-I interferon production. The sequence is that of Polyglutamine-binding protein 1 (PQBP1) from Gorilla gorilla gorilla (Western lowland gorilla).